Here is a 1795-residue protein sequence, read N- to C-terminus: Protein TIC 214 (1795 aa).

Transmembrane regions (helical) follow at residues 19 to 39 (IINS…FSIG), 68 to 88 (FIAG…HLAL), 91 to 111 (PHTI…WNNH), 133 to 153 (VFLN…SSML), 176 to 196 (VGWL…LVWI), and 227 to 247 (IFSI…PSPI). Positions 1490 to 1517 (EKESTGQVEFESDKEQQRNSESALSNQE) are disordered. Residues 1508-1517 (NSESALSNQE) show a composition bias toward polar residues.

The protein belongs to the TIC214 family. As to quaternary structure, part of the Tic complex.

It is found in the plastid. The protein resides in the chloroplast inner membrane. Its function is as follows. Involved in protein precursor import into chloroplasts. May be part of an intermediate translocation complex acting as a protein-conducting channel at the inner envelope. This Crucihimalaya wallichii (Rock-cress) protein is Protein TIC 214.